Consider the following 389-residue polypeptide: Phospho-N-acetylmuramoyl-pentapeptide-transferase (389 aa).

Helical transmembrane passes span 25–45 (RAVM…PWVI), 74–94 (MGGV…CDWG), 97–117 (FIWV…VDDY), 134–154 (FFWQ…SVSE), 190–210 (ISYP…IVGS), 222–242 (GLVI…AYVM), 259–279 (AGEL…FLWF), 286–306 (VFMG…VAVI), 311–331 (IVLF…MAQV), and 366–386 (QVTV…LSTL).

The protein belongs to the glycosyltransferase 4 family. MraY subfamily. Requires Mg(2+) as cofactor.

It is found in the cell inner membrane. It carries out the reaction UDP-N-acetyl-alpha-D-muramoyl-L-alanyl-gamma-D-glutamyl-meso-2,6-diaminopimeloyl-D-alanyl-D-alanine + di-trans,octa-cis-undecaprenyl phosphate = di-trans,octa-cis-undecaprenyl diphospho-N-acetyl-alpha-D-muramoyl-L-alanyl-D-glutamyl-meso-2,6-diaminopimeloyl-D-alanyl-D-alanine + UMP. Its pathway is cell wall biogenesis; peptidoglycan biosynthesis. Catalyzes the initial step of the lipid cycle reactions in the biosynthesis of the cell wall peptidoglycan: transfers peptidoglycan precursor phospho-MurNAc-pentapeptide from UDP-MurNAc-pentapeptide onto the lipid carrier undecaprenyl phosphate, yielding undecaprenyl-pyrophosphoryl-MurNAc-pentapeptide, known as lipid I. In Cupriavidus necator (strain ATCC 17699 / DSM 428 / KCTC 22496 / NCIMB 10442 / H16 / Stanier 337) (Ralstonia eutropha), this protein is Phospho-N-acetylmuramoyl-pentapeptide-transferase.